A 304-amino-acid chain; its full sequence is Glycosyltransferase AglE (304 aa).

This sequence belongs to the glycosyltransferase 2 family.

The protein resides in the cell membrane. The protein operates within cell surface structure biogenesis; S-layer biogenesis. Its function is as follows. Involved in the assembly of a N-linked pentasaccharide that decorates the S-layer glycoprotein and flagellins. Catalyzes the addition to the dolichol phosphate carrier of the hexuronic acid found at position 4 of the pentasaccharide. The polypeptide is Glycosyltransferase AglE (aglE) (Haloferax volcanii (strain ATCC 29605 / DSM 3757 / JCM 8879 / NBRC 14742 / NCIMB 2012 / VKM B-1768 / DS2) (Halobacterium volcanii)).